We begin with the raw amino-acid sequence, 78 residues long: HssA/B-like protein 30 (78 aa).

Residues 1-32 form a disordered region; sequence MTLFSSITSISKTNTSSKSSVNSLSGSSLSMG.

This sequence belongs to the hssA/B family.

The sequence is that of HssA/B-like protein 30 (hssl30) from Dictyostelium discoideum (Social amoeba).